A 451-amino-acid chain; its full sequence is MDYKTKKNSNATVDIKLTFEASDIEKAFDKTYEEKQKNVKIPGFRPGKAPLNMVKRHLGDSVASDAINTLIVDGMTSILSKLEHPMIRFPKFEIQDYQPGKNLIATAIYETNPEITLGKYKKIKIKLPEVSVSDLDVSEEVEKVRKNLARKQLKEEGQAAVAGDIIDMEYTVCEKGQESKNSGNTSNDYHLGHENNLKGFDENLYGMKSGEKKDFVHTFPEDYSQNEVAGKTFEYSVTIKALYANILPAVDDDLASEFDGSESLNVLKDKIRKNLKEGFEDRVKNKKLDEIYKEIIDDSKYVFPESYLREESEHVFHNMIHEFKLPHMTMEKYANMVQKDLKEVQESFQKLAETRLKHYFTRQKIAEIENISYSEQDFDADLEKLASSYQISLSDLKKELEKGKLMEQYRENFFAKKIDNILFDLVEKKYTDKLNIGQIKDYLNQKEEVKA.

Residues Gly163–Pro248 form the PPIase FKBP-type domain.

The protein belongs to the FKBP-type PPIase family. Tig subfamily.

It localises to the cytoplasm. The catalysed reaction is [protein]-peptidylproline (omega=180) = [protein]-peptidylproline (omega=0). Involved in protein export. Acts as a chaperone by maintaining the newly synthesized protein in an open conformation. Functions as a peptidyl-prolyl cis-trans isomerase. In Leptospira interrogans serogroup Icterohaemorrhagiae serovar copenhageni (strain Fiocruz L1-130), this protein is Trigger factor.